Consider the following 89-residue polypeptide: Small ribosomal subunit protein bS18 (89 aa).

Positions 1–15 (MTTANTNETAAAAAA) are enriched in low complexity. The tract at residues 1-22 (MTTANTNETAAAAAAKNRRNKK) is disordered.

Belongs to the bacterial ribosomal protein bS18 family. As to quaternary structure, part of the 30S ribosomal subunit. Forms a tight heterodimer with protein bS6.

Its function is as follows. Binds as a heterodimer with protein bS6 to the central domain of the 16S rRNA, where it helps stabilize the platform of the 30S subunit. The sequence is that of Small ribosomal subunit protein bS18 from Caldanaerobacter subterraneus subsp. tengcongensis (strain DSM 15242 / JCM 11007 / NBRC 100824 / MB4) (Thermoanaerobacter tengcongensis).